The chain runs to 36 residues: ERGLPEGAECDGNESDCKCAGAWIKCRCPPMWHING.

The protein belongs to the neurotoxin 04 (omega-agtx) family. 01 (type I omega-agtx) subfamily. Expressed by the venom gland.

It is found in the secreted. In terms of biological role, omega-agatoxin are antagonist of voltage-gated calcium channels. They block insect neuromuscular transmission presynaptically. This toxin is a blocker of L-type calcium channels (Cav/CACNA1). This Agelenopsis aperta (North American funnel-web spider) protein is Omega-agatoxin-Aa1b.